The chain runs to 994 residues: MVLDKILRAGEGRILRKLKAIAEQVNLIEDDFTGLSDGELRGMTDEFRQRLADGKETLDDLLPEAFAAVREAARRTLGQRHFDVQIMGGAALHLGNIAEMKTGEGKTLVSTLPTYLNALAGKGVHVITVNDYLAQRDAENMGRVHRFLGLTVGVIHPQMPPPVRRAQYACDITYGTNNEFGFDYLRDNMAWSSEELVQRGHNFAVVDEVDSILIDEARTPLIISGPADHPTRWYTEFARIAPLLERDVDYEVEEGKRTVAITESGVEKVEDQLGIENLYESVNTPLVGYLNNSLKAKELYKRDKDYIVTDGEVLIVDEFTGRVLHGRRYSEGMHQAIEAKEKVEIKQENQTLATITLQNYFRLYDKLSGMTGTAMTEAAEFHQIYSLGVVPIPTNKPMVRLDQPDVVYKTEIAKFDAVVEDIAERHEKGQPVLVGTTSVEKSEYLSKQLRKRGVPHEVLNAKHHEREAAIIAEAGRKGAVTVATNMAGRGTDIMLGGNPEFIAQAELRQRGLSPIETPEDYEAAWQEALEKARQSVKAEHEEVVDAGGLYVLGTERHESRRIDNQLRGRAGRQGDRGESRFYLSLGDDLMRLFNAAAVEGIMDRLNIPEDVPIESKIVTRAIRSAQTQVEGQNFEIRKNVLKYDEVMNKQRTVIYEERRKVLGGADLHEQVRHFVDDTVEGYVRGATADGYPEEWDLDTLWTALGQLYPVGVVAPDVDDRDGLTADHLLEDIQVDAQEAYDRRELDLGDGPDSEPIMRELERRVVLAVLDRKWREHLYEMDYLQEGIGLRAMGQRDPLVEYQREGFDMFQTMMEGIKEESVRLLFNVEVQVAGQEEAATSVGVEPAVSAAPAPPAAAATLPAPAVPTIPDGAGPVADAQPVRPAAARQTPPPPSPVPSAPLPVFVKGLEPRRPTGGLRYTAPSVDGGSGPVTTVDGRSGLGRPAGDGALSAARGEAGTAQPGAGTRPARNAPCPCGSGRKYKRCHGDPARRNTE.

ATP-binding positions include Q85, 103-107 (GEGKT), and D492. Residues 868 to 888 (IPDGAGPVADAQPVRPAAARQ) are compositionally biased toward low complexity. Residues 868–994 (IPDGAGPVAD…HGDPARRNTE (127 aa)) form a disordered region. Over residues 889–900 (TPPPPSPVPSAP) the composition is skewed to pro residues. The Zn(2+) site is built by C973, C975, C984, and H985. The segment covering 984–994 (CHGDPARRNTE) has biased composition (basic and acidic residues).

Belongs to the SecA family. In terms of assembly, monomer and homodimer. Part of the essential Sec protein translocation apparatus which comprises SecA, SecYEG and auxiliary proteins SecDF. Other proteins may also be involved. Zn(2+) serves as cofactor.

The protein localises to the cell membrane. It localises to the cytoplasm. The enzyme catalyses ATP + H2O + cellular proteinSide 1 = ADP + phosphate + cellular proteinSide 2.. In terms of biological role, part of the Sec protein translocase complex. Interacts with the SecYEG preprotein conducting channel. Has a central role in coupling the hydrolysis of ATP to the transfer of proteins into and across the cell membrane, serving as an ATP-driven molecular motor driving the stepwise translocation of polypeptide chains across the membrane. The sequence is that of Protein translocase subunit SecA from Frankia casuarinae (strain DSM 45818 / CECT 9043 / HFP020203 / CcI3).